The chain runs to 589 residues: L-fucose isomerase (589 aa).

Catalysis depends on proton acceptor residues Glu340 and Asp364. The Mn(2+) site is built by Glu340, Asp364, and His527.

It belongs to the L-fucose isomerase family. Requires Mn(2+) as cofactor.

It is found in the cytoplasm. It catalyses the reaction L-fucose = L-fuculose. Its pathway is carbohydrate degradation; L-fucose degradation; L-lactaldehyde and glycerone phosphate from L-fucose: step 1/3. Its function is as follows. Converts the aldose L-fucose into the corresponding ketose L-fuculose. The chain is L-fucose isomerase from Haemophilus influenzae (strain ATCC 51907 / DSM 11121 / KW20 / Rd).